The chain runs to 133 residues: ATP synthase epsilon chain (133 aa).

This sequence belongs to the ATPase epsilon chain family. In terms of assembly, F-type ATPases have 2 components, CF(1) - the catalytic core - and CF(0) - the membrane proton channel. CF(1) has five subunits: alpha(3), beta(3), gamma(1), delta(1), epsilon(1). CF(0) has three main subunits: a, b and c.

It localises to the cell membrane. Functionally, produces ATP from ADP in the presence of a proton gradient across the membrane. This is ATP synthase epsilon chain from Clostridium botulinum (strain ATCC 19397 / Type A).